The sequence spans 180 residues: UPF0227 protein YcfP (180 aa).

This sequence belongs to the UPF0227 family.

The polypeptide is UPF0227 protein YcfP (Salmonella gallinarum (strain 287/91 / NCTC 13346)).